Reading from the N-terminus, the 479-residue chain is Flap endonuclease 1 (479 aa).

The N-domain stretch occupies residues 1–106 (MGIKGLTKFI…SELEKRGEKR (106 aa)). Asp-34 is a binding site for Mg(2+). DNA contacts are provided by Arg-47 and Arg-72. Asp-88, Glu-160, Glu-162, Asp-181, and Asp-183 together coordinate Mg(2+). The interval 124 to 266 (EIKKQSGRTV…KTAYNLIKEY (143 aa)) is I-domain. Glu-160 lines the DNA pocket. DNA-binding residues include Gly-244 and Asp-246. Position 246 (Asp-246) interacts with Mg(2+). The interaction with PCNA stretch occupies residues 349 to 357 (TQRRLDTFF). The segment at 379–455 (AKGKGKKREL…NSDSGNIKNE (77 aa)) is disordered. Basic and acidic residues predominate over residues 403-428 (NIKDEKKNTDKMDELKNKSDENFVKD).

It belongs to the XPG/RAD2 endonuclease family. FEN1 subfamily. Interacts with PCNA. Three molecules of FEN1 bind to one PCNA trimer with each molecule binding to one PCNA monomer. PCNA stimulates the nuclease activity without altering cleavage specificity. Requires Mg(2+) as cofactor. Post-translationally, phosphorylated. Phosphorylation upon DNA damage induces relocalization to the nuclear plasma.

It is found in the nucleus. It localises to the nucleolus. The protein localises to the nucleoplasm. The protein resides in the mitochondrion. Its function is as follows. Structure-specific nuclease with 5'-flap endonuclease and 5'-3' exonuclease activities involved in DNA replication and repair. During DNA replication, cleaves the 5'-overhanging flap structure that is generated by displacement synthesis when DNA polymerase encounters the 5'-end of a downstream Okazaki fragment. It enters the flap from the 5'-end and then tracks to cleave the flap base, leaving a nick for ligation. Also involved in the long patch base excision repair (LP-BER) pathway, by cleaving within the apurinic/apyrimidinic (AP) site-terminated flap. Acts as a genome stabilization factor that prevents flaps from equilibrating into structures that lead to duplications and deletions. Also possesses 5'-3' exonuclease activity on nicked or gapped double-stranded DNA, and exhibits RNase H activity. Also involved in replication and repair of rDNA and in repairing mitochondrial DNA. The chain is Flap endonuclease 1 from Plasmodium chabaudi chabaudi.